Here is a 498-residue protein sequence, read N- to C-terminus: MTSSKNPTNDNSYFDAVLVGAGIMSSTLALLISEVLPDIKFLIIEKLKAPGSESTGAFNNAGTGHAANCELNYTPLDEKGNLKIDKALSINRSFERSMSLWASLYESGKIDIKKFLKFIPHISFVSGQDNISFLKKRFQKMTDNPEFIDMEFSTSFDEISSWAPLITKDRNPSTQIAATRIGRGTDINFEALTKEYLSLVSLNKNVEIRYKTELVDLKKIDKKQWELEISSEGRKTSIRTGYVFLGAGGKTINYLQKSKIPEAKSYGGFPVSGKWLICEKKDLTEKHNSKVYGKADIGSPPMSVPHLDTRWIDNKKLLLYGPFAGFTTKFLKQSSYFDLFSSIKKNNIFSMLDVGFKNNDLINYLISQSLKNHNSRVDNLKNMMPSANPSDWYLKNAGQRVQIIKKTEGGGSLKFGTEIVNSSDGSLSALLGASPGASTAVSIMVEVLEKSVLLLNDKHNLQKKINDLIYPELSDSENKSIYIKDIKKRNNSIFGFHP.

Belongs to the MQO family. It depends on FAD as a cofactor.

The catalysed reaction is (S)-malate + a quinone = a quinol + oxaloacetate. It participates in carbohydrate metabolism; tricarboxylic acid cycle; oxaloacetate from (S)-malate (quinone route): step 1/1. This is Probable malate:quinone oxidoreductase from Prochlorococcus marinus (strain MIT 9312).